A 622-amino-acid polypeptide reads, in one-letter code: Chaperone protein HscA homolog (622 aa).

This sequence belongs to the heat shock protein 70 family.

Chaperone involved in the maturation of iron-sulfur cluster-containing proteins. Has a low intrinsic ATPase activity which is markedly stimulated by HscB. The polypeptide is Chaperone protein HscA homolog (Aromatoleum aromaticum (strain DSM 19018 / LMG 30748 / EbN1) (Azoarcus sp. (strain EbN1))).